The primary structure comprises 278 residues: Thiazole synthase (278 aa).

Lys-109 acts as the Schiff-base intermediate with DXP in catalysis. Residues Gly-170, 197-198 (AG), and 219-220 (NT) contribute to the 1-deoxy-D-xylulose 5-phosphate site.

Belongs to the ThiG family. Homotetramer. Forms heterodimers with either ThiH or ThiS.

The protein resides in the cytoplasm. The enzyme catalyses [ThiS sulfur-carrier protein]-C-terminal-Gly-aminoethanethioate + 2-iminoacetate + 1-deoxy-D-xylulose 5-phosphate = [ThiS sulfur-carrier protein]-C-terminal Gly-Gly + 2-[(2R,5Z)-2-carboxy-4-methylthiazol-5(2H)-ylidene]ethyl phosphate + 2 H2O + H(+). It functions in the pathway cofactor biosynthesis; thiamine diphosphate biosynthesis. In terms of biological role, catalyzes the rearrangement of 1-deoxy-D-xylulose 5-phosphate (DXP) to produce the thiazole phosphate moiety of thiamine. Sulfur is provided by the thiocarboxylate moiety of the carrier protein ThiS. In vitro, sulfur can be provided by H(2)S. The sequence is that of Thiazole synthase from Cupriavidus necator (strain ATCC 17699 / DSM 428 / KCTC 22496 / NCIMB 10442 / H16 / Stanier 337) (Ralstonia eutropha).